We begin with the raw amino-acid sequence, 430 residues long: Histidinol dehydrogenase (430 aa).

NAD(+)-binding residues include tyrosine 124, glutamine 185, and asparagine 208. Positions 233, 255, and 258 each coordinate substrate. 2 residues coordinate Zn(2+): glutamine 255 and histidine 258. Catalysis depends on proton acceptor residues glutamate 324 and histidine 325. 4 residues coordinate substrate: histidine 325, aspartate 358, glutamate 412, and histidine 418. Position 358 (aspartate 358) interacts with Zn(2+). Histidine 418 provides a ligand contact to Zn(2+).

It belongs to the histidinol dehydrogenase family. It depends on Zn(2+) as a cofactor.

It catalyses the reaction L-histidinol + 2 NAD(+) + H2O = L-histidine + 2 NADH + 3 H(+). Its pathway is amino-acid biosynthesis; L-histidine biosynthesis; L-histidine from 5-phospho-alpha-D-ribose 1-diphosphate: step 9/9. Its function is as follows. Catalyzes the sequential NAD-dependent oxidations of L-histidinol to L-histidinaldehyde and then to L-histidine. The polypeptide is Histidinol dehydrogenase (Leptospira biflexa serovar Patoc (strain Patoc 1 / Ames)).